A 1191-amino-acid polypeptide reads, in one-letter code: MDMEDEYEPQYNVDDDEEEITQEDAWAVISAYFEEKGLVRQQLDSFDEFIQNTMQEIVDESADIEIRPESQHNPGHQSDFAETIYKINFGQIYLSKPMMTESDGETATLFPKAARLRNLTYSAPLYVDVTKRVIKKGHDGEEVTETQDFTKVFIGKVPIMLRSSYCTLYQNSEKDLTELGECPLDQGGYFIINGSEKVLIAQEKMSTNHVYVFKKRQPNKYAFVAEVRSMADTQNRPPSTMFVRMLSRTSAKGGSSGQYIRATLPYIRTEIPIIIVFRALGFVADKDILEHICYDFNDTQMMELLRPSLEEAFVIQNQQVALDYIGKRGATVGVTREKRIKYAKEILQKEMLPHVGVGEYCETKKAYYFGYIIHRLLLCALGRRAEDDRDHYGNKRLDLAGPLLGGLFRMLFRKLTRDVRGYVQKCVDNGKDVNLQFAIKAKTITSGLKYSLATGNWGQANAAGTRAGVSQVLNRLTYASTLSHLRRLNSPIGREGKLAKPRQLHNSQWGMMCPAETPEGQACGLVKNLALMVYITVGSAAYPILEFLEEWGTENFEEISPAVIPQATKIFVNGTWVGIHRDPDMLVRTLRRLRRRVDVNTEVGVVRDIRLKELRIYTDYGRCSRPLFIVEKQRLMIKKKDIQTLQQRESPDEGGWHDLVAKGYIEYIDTEEEETTMISMTINDLVQARLNPGDAYSDTYTHCEIHPSLILGVCASIIPFPDHNQSPRNTYQSAMGKQAMGIYVTNYQFRMDTLAYVLYYPQKPLVTTRAMEHLHFRQLPAGINAIVAISCYSGYNQEDSVIMNQSSIDRGFFRSLFFRSYRDEEKKMGTLVKEDFGRPDRASTMGMRHGSYDKLDDDGLAPPGTRVSGEDVIIGKTTPISQDDAQGQASRYTRKDHSTSLRHSETGMVDQVLLTTNADGLRFVKVRVRSVRIPQIGDKFSSRHGQKGTVGMTYTQEDMPWTVEGITPDIIVNPHAIPSRMTIGQLIECIMGKVAAHMGKEGDATPFTDVTVDNISKALHKCGYQMRGFETMYNGHTGRRLSAMIFLGPTYYQRLKHMVDDKIHSRGRGPVQILTRQPAEGRSRDGGLRFGEMERDCMIAHGAAHFLKERLFDQSDAYRVHVCERCGLIAIANLKKNSFECRGCKNKTDIVQVHIPYACKLLFQELMAMAIAPRMLTKDVKLAKDQKKKGA.

Asp799 is a binding site for Mg(2+). Residues 842 to 903 are disordered; it reads ASTMGMRHGS…RKDHSTSLRH (62 aa). Over residues 878 to 891 the composition is skewed to polar residues; it reads TPISQDDAQGQASR. Basic and acidic residues predominate over residues 893–903; that stretch reads TRKDHSTSLRH. Cys1123, Cys1126, Cys1141, and Cys1144 together coordinate Zn(2+). A C4-type zinc finger spans residues 1123 to 1144; it reads CERCGLIAIANLKKNSFECRGC.

This sequence belongs to the RNA polymerase beta chain family. Component of the RNA polymerase II (Pol II) complex consisting of 12 subunits.

It is found in the nucleus. It catalyses the reaction RNA(n) + a ribonucleoside 5'-triphosphate = RNA(n+1) + diphosphate. DNA-dependent RNA polymerase catalyzes the transcription of DNA into RNA using the four ribonucleoside triphosphates as substrates. Second largest component of RNA polymerase II which synthesizes mRNA precursors and many functional non-coding RNAs. Proposed to contribute to the polymerase catalytic activity and forms the polymerase active center together with the largest subunit. Pol II is the central component of the basal RNA polymerase II transcription machinery. It is composed of mobile elements that move relative to each other. RPB2 is part of the core element with the central large cleft, the clamp element that moves to open and close the cleft and the jaws that are thought to grab the incoming DNA template. This chain is DNA-directed RNA polymerase II subunit RPB2 (RPB2), found in Solanum lycopersicum (Tomato).